Here is a 129-residue protein sequence, read N- to C-terminus: Large ribosomal subunit protein bL21 (129 aa).

Belongs to the bacterial ribosomal protein bL21 family. Part of the 50S ribosomal subunit. Contacts protein L20.

This protein binds to 23S rRNA in the presence of protein L20. In Microcystis aeruginosa (strain NIES-843 / IAM M-2473), this protein is Large ribosomal subunit protein bL21.